We begin with the raw amino-acid sequence, 287 residues long: GDT1-like protein C17G8.08c (287 aa).

Transmembrane regions (helical) follow at residues 7–27, 50–70, 89–109, 112–132, 194–214, 232–252, and 267–287; these read WAII…GEGM, LIFS…FIVA, ALFI…LLFP, LTDI…LMEA, VMAT…FVSE, VYGV…LAVI, and MFIG…QGFF.

Belongs to the GDT1 family.

It is found in the membrane. The chain is GDT1-like protein C17G8.08c from Schizosaccharomyces pombe (strain 972 / ATCC 24843) (Fission yeast).